Here is a 620-residue protein sequence, read N- to C-terminus: Membrane protein insertase YidC (620 aa).

The helical transmembrane segment at 7 to 27 threads the bilayer; that stretch reads NYLIAIALSVMVVLGWQFFYM. The segment covering 37–58 has biased composition (low complexity); it reads AEQAQQAQQAKTPATQATPGAA. The segment at 37–77 is disordered; the sequence is AEQAQQAQQAKTPATQATPGAAVNGALPGQTQASATTSRED. 4 helical membrane passes run 399–419, 469–489, 514–534, and 560–580; these read FGVAILLTTIAVKLLFFPLAS, WPLLLQIPVFFALYKVIYITI, LFGLLPFESPAMLHLGIWPII, and WMPLVFTFMLGSFPAGLVIYW.

This sequence belongs to the OXA1/ALB3/YidC family. Type 1 subfamily. In terms of assembly, interacts with the Sec translocase complex via SecD. Specifically interacts with transmembrane segments of nascent integral membrane proteins during membrane integration.

Its subcellular location is the cell inner membrane. In terms of biological role, required for the insertion and/or proper folding and/or complex formation of integral membrane proteins into the membrane. Involved in integration of membrane proteins that insert both dependently and independently of the Sec translocase complex, as well as at least some lipoproteins. Aids folding of multispanning membrane proteins. The polypeptide is Membrane protein insertase YidC (Allorhizobium ampelinum (strain ATCC BAA-846 / DSM 112012 / S4) (Agrobacterium vitis (strain S4))).